A 235-amino-acid chain; its full sequence is Bypass of stop codon protein 2 (235 aa).

The chain crosses the membrane as a helical span at residues 68–88 (FGIFQLMCSLGVIVLLLPIII). Ser177 carries the post-translational modification Phosphoserine.

Its subcellular location is the lipid droplet. It localises to the membrane. The sequence is that of Bypass of stop codon protein 2 (BSC2) from Saccharomyces cerevisiae (strain ATCC 204508 / S288c) (Baker's yeast).